A 173-amino-acid chain; its full sequence is Crossover junction endodeoxyribonuclease RuvC (173 aa).

Residues Asp8, Glu67, and Asp139 contribute to the active site. Mg(2+)-binding residues include Asp8, Glu67, and Asp139.

This sequence belongs to the RuvC family. In terms of assembly, homodimer which binds Holliday junction (HJ) DNA. The HJ becomes 2-fold symmetrical on binding to RuvC with unstacked arms; it has a different conformation from HJ DNA in complex with RuvA. In the full resolvosome a probable DNA-RuvA(4)-RuvB(12)-RuvC(2) complex forms which resolves the HJ. Mg(2+) serves as cofactor.

It is found in the cytoplasm. It carries out the reaction Endonucleolytic cleavage at a junction such as a reciprocal single-stranded crossover between two homologous DNA duplexes (Holliday junction).. In terms of biological role, the RuvA-RuvB-RuvC complex processes Holliday junction (HJ) DNA during genetic recombination and DNA repair. Endonuclease that resolves HJ intermediates. Cleaves cruciform DNA by making single-stranded nicks across the HJ at symmetrical positions within the homologous arms, yielding a 5'-phosphate and a 3'-hydroxyl group; requires a central core of homology in the junction. The consensus cleavage sequence is 5'-(A/T)TT(C/G)-3'. Cleavage occurs on the 3'-side of the TT dinucleotide at the point of strand exchange. HJ branch migration catalyzed by RuvA-RuvB allows RuvC to scan DNA until it finds its consensus sequence, where it cleaves and resolves the cruciform DNA. The polypeptide is Crossover junction endodeoxyribonuclease RuvC (Shewanella frigidimarina (strain NCIMB 400)).